The following is a 601-amino-acid chain: Glutamine--fructose-6-phosphate aminotransferase [isomerizing] (601 aa).

Cys-2 functions as the Nucleophile; for GATase activity in the catalytic mechanism. Residues 2–216 (CGIVGYIGTN…DKEIVIVTKD (215 aa)) form the Glutamine amidotransferase type-2 domain. SIS domains are found at residues 282–421 (ILDE…EIGD) and 453–591 (IAGE…VDKP). Lys-596 (for Fru-6P isomerization activity) is an active-site residue.

As to quaternary structure, homodimer.

Its subcellular location is the cytoplasm. It carries out the reaction D-fructose 6-phosphate + L-glutamine = D-glucosamine 6-phosphate + L-glutamate. Its function is as follows. Catalyzes the first step in hexosamine metabolism, converting fructose-6P into glucosamine-6P using glutamine as a nitrogen source. The polypeptide is Glutamine--fructose-6-phosphate aminotransferase [isomerizing] (Listeria innocua serovar 6a (strain ATCC BAA-680 / CLIP 11262)).